A 587-amino-acid chain; its full sequence is Succinate dehydrogenase flavoprotein subunit (587 aa).

FAD contacts are provided by residues 15-20 (GAGGAG), 39-54 (SKVF…AQGG), and Asp223. Position 47 is a tele-8alpha-FAD histidine (His47). His244 and Thr256 together coordinate substrate. The Proton acceptor role is filled by Arg288. Position 355 (His355) interacts with substrate. Position 389 (Glu389) interacts with FAD. A substrate-binding site is contributed by Arg400. 405–406 (SL) provides a ligand contact to FAD.

This sequence belongs to the FAD-dependent oxidoreductase 2 family. FRD/SDH subfamily. In terms of assembly, part of an enzyme complex containing four subunits: a flavoprotein, an iron-sulfur protein, cytochrome b-556 and a hydrophobic protein. Requires FAD as cofactor.

The protein localises to the cell inner membrane. It catalyses the reaction a quinone + succinate = fumarate + a quinol. Its pathway is carbohydrate metabolism; tricarboxylic acid cycle; fumarate from succinate (bacterial route): step 1/1. This Coxiella burnetii (strain RSA 493 / Nine Mile phase I) protein is Succinate dehydrogenase flavoprotein subunit (sdhA).